A 556-amino-acid polypeptide reads, in one-letter code: Bifunctional methyltransferase (556 aa).

Residues 1–310 (MQYSIQKFLN…NRVIEISLIQ (310 aa)) form an RF MTase region. S-adenosyl-L-methionine is bound by residues 148 to 152 (GTGSG), D171, W200, and N215. Position 215–218 (215–218 (NPPY)) interacts with substrate. Positions 313-556 (RSYARRIGKS…IITKIPPKSY (244 aa)) are tRNA MTase. The segment at 348-399 (KNYNSCKIKSNYTKFNLEKSKESVSRGAERIKIREHLRTYKEDVANFSSSTS) is insert. S-adenosyl-L-methionine contacts are provided by E403, E428, N455, and D477. The active site involves D477. Substrate-binding residues include K481 and D513.

This sequence in the C-terminal section; belongs to the class I-like SAM-binding methyltransferase superfamily. TrmB family. In the N-terminal section; belongs to the protein N5-glutamine methyltransferase family. PrmC subfamily.

The catalysed reaction is L-glutaminyl-[peptide chain release factor] + S-adenosyl-L-methionine = N(5)-methyl-L-glutaminyl-[peptide chain release factor] + S-adenosyl-L-homocysteine + H(+). It carries out the reaction guanosine(46) in tRNA + S-adenosyl-L-methionine = N(7)-methylguanosine(46) in tRNA + S-adenosyl-L-homocysteine. In terms of biological role, methylates the class 1 translation termination release factors RF1/PrfA and RF2/PrfB on the glutamine residue of the universally conserved GGQ motif. Its function is as follows. Catalyzes the formation of N(7)-methylguanine at position 46 (m7G46) in tRNA. This is Bifunctional methyltransferase (prmC/trmB) from Rickettsia bellii (strain RML369-C).